A 316-amino-acid polypeptide reads, in one-letter code: Long form salivary protein D7L1 (316 aa).

The first 23 residues, 1-23, serve as a signal peptide directing secretion; that stretch reads MSHTRAVVLAVACLCLILVQVEG. Cystine bridges form between Cys40/Cys76, Cys72/Cys131, Cys181/Cys214, and Cys255/Cys266.

It belongs to the PBP/GOBP family.

It is found in the secreted. Functionally, modulates blood feeding of female mosquitoes on vertebrate species by binding and sequestering different mediators involved in the host response, such as biogenic amines and eicosanoids. Binds serotonin, tryptamine, histamine, leukotriene C4, leukotriene D4 and leukotriene E4. Does not bind octopamine, dopamine, noradrenaline, adrenaline and prostaglandin PGF2alpha. The polypeptide is Long form salivary protein D7L1 (Anopheles atroparvus (European mosquito)).